Consider the following 464-residue polypeptide: MLTKTIQEEKKTPKDESIGSYWITTFGCQMNKADSERMAGTLEKMGYSRAIDELKADLVLYNTCTIRDSAQQKVYSFLGRQIKRKHSLPKLKLVVAGCLAQQEGESLLRRVPELDLIMGPQHVNNLENLLERVDSGNQVVATEETFISEDITNARRDSTICGWVNIIYGCNERCSYCVVPSVRGKEQSRYPKAIKSEIQTLAQNNYKEITLLGQNIDAYGRDLPVTTKEGRKENTLTDLLYFIHDVDGIRRIRFSTSHPKYFSKRLIKACYELDKVCEHFHIPFQSGNDEILRLMARGYTIDKYKKIIENIRSLMPNASITADAIVAFPGETEKQYQDTLRLISDVGFDQVMTAAYSPRPNTPAAIWNNQIAEEVKKERLKEINELVEATSRKRNQRYLNNTESVLIEGLNPKNSMQMMGRTRTNRLTFVEIPENIEFNYSFGDELNVKITEARSFSLSGQIYK.

Positions 19 to 135 (GSYWITTFGC…LENLLERVDS (117 aa)) constitute an MTTase N-terminal domain. [4Fe-4S] cluster is bound by residues C28, C64, C98, C170, C174, and C177. Residues 156 to 393 (RDSTICGWVN…NELVEATSRK (238 aa)) enclose the Radical SAM core domain. Positions 396–464 (QRYLNNTESV…SFSLSGQIYK (69 aa)) constitute a TRAM domain.

This sequence belongs to the methylthiotransferase family. MiaB subfamily. In terms of assembly, monomer. [4Fe-4S] cluster is required as a cofactor.

It is found in the cytoplasm. It catalyses the reaction N(6)-dimethylallyladenosine(37) in tRNA + (sulfur carrier)-SH + AH2 + 2 S-adenosyl-L-methionine = 2-methylsulfanyl-N(6)-dimethylallyladenosine(37) in tRNA + (sulfur carrier)-H + 5'-deoxyadenosine + L-methionine + A + S-adenosyl-L-homocysteine + 2 H(+). Functionally, catalyzes the methylthiolation of N6-(dimethylallyl)adenosine (i(6)A), leading to the formation of 2-methylthio-N6-(dimethylallyl)adenosine (ms(2)i(6)A) at position 37 in tRNAs that read codons beginning with uridine. The sequence is that of tRNA-2-methylthio-N(6)-dimethylallyladenosine synthase from Prochlorococcus marinus (strain MIT 9515).